The chain runs to 581 residues: Prolactin receptor (581 aa).

The first 24 residues, 1 to 24, serve as a signal peptide directing secretion; sequence MKENAASRVVFILLLFLSVSLLNG. The Extracellular portion of the chain corresponds to 25–237; sequence QSPPEKPKLV…NDFPVKDTSM (213 aa). Fibronectin type-III domains follow at residues 27–127 and 129–229; these read PPEK…IVEP and PPAN…IPND. Residues C36 and C46 are joined by a disulfide bond. N59 is a glycosylation site (N-linked (GlcNAc...) asparagine). A disulfide bridge connects residues C75 and C86. N132 carries an N-linked (GlcNAc...) asparagine glycan. Residues D211 and H212 each coordinate Zn(2+). Positions 215-219 match the WSXWS motif motif; that stretch reads WSEWS. The helical transmembrane segment at 238 to 258 threads the bilayer; sequence WIFVAILSAVICLIMVWAVAL. At 259–581 the chain is on the cytoplasmic side; it reads KGYSMVTCIL…PAKKAPPALP (323 aa). The Box 1 motif motif lies at 267–275; the sequence is ILPPVPGPK. 2 disordered regions span residues 324-384 and 458-499; these read QLMP…EKLE and DQHA…PRPQ. 3 stretches are compositionally biased toward basic and acidic residues: residues 329-349, 375-384, and 469-483; these read PSKEHTEQGVKPMHLDLDSDS, HTPEGPEKLE, and ETGREGKATKQRESE.

The protein belongs to the type I cytokine receptor family. Type 1 subfamily. In terms of assembly, interacts with SMARCA1. Interacts with NEK3 and VAV2 and this interaction is prolactin-dependent. Expressed in all tissues examined; liver, peripheral blood lymphocytes, endometrium, corpus luteum, intestine, fetal thymus, fetal spleen, fetal liver and fetal brain.

Its subcellular location is the membrane. Functionally, this is a receptor for the anterior pituitary hormone prolactin. This chain is Prolactin receptor (PRLR), found in Bos taurus (Bovine).